A 283-amino-acid chain; its full sequence is Nicotine 6-hydroxylase medium subunit (283 aa).

Residues 1–176 enclose the FAD-binding PCMH-type domain; sequence MKLPAIRYAS…TDVWIPSRPN (176 aa). Residues 31 to 35 and 110 to 114 contribute to the FAD site; these read AGGQS and TLGGS.

Heterotrimer composed of a large subunit (NdhL), a medium subunit (NdhM) and a small subunit (NdhS). It depends on FAD as a cofactor.

Its subcellular location is the cytoplasm. It catalyses the reaction (R)-nicotine + A + H2O = (R)-6-hydroxynicotine + AH2. The enzyme catalyses (S)-nicotine + A + H2O = (S)-6-hydroxynicotine + AH2. The protein operates within alkaloid degradation; nicotine degradation; 6-hydroxypseudooxynicotine from nicotine (R-isomer route): step 1/2. Its pathway is alkaloid degradation; nicotine degradation; 6-hydroxypseudooxynicotine from nicotine (S-isomer route): step 1/2. Nicotine dehydrogenase activity is inhibited by tungsten. Component of the nicotine 6-hydroxylase, which is involved in the degradation of nicotine. Catalyzes the hydroxylation of the pyridine ring at C6 to form 6-hydroxynicotine. Can use both L-nicotine and D-nicotine. In Paenarthrobacter nicotinovorans (Arthrobacter nicotinovorans), this protein is Nicotine 6-hydroxylase medium subunit.